We begin with the raw amino-acid sequence, 211 residues long: Protein-L-isoaspartate O-methyltransferase (211 aa).

Ser-62 is a catalytic residue.

It belongs to the methyltransferase superfamily. L-isoaspartyl/D-aspartyl protein methyltransferase family.

It is found in the cytoplasm. It carries out the reaction [protein]-L-isoaspartate + S-adenosyl-L-methionine = [protein]-L-isoaspartate alpha-methyl ester + S-adenosyl-L-homocysteine. Its function is as follows. Catalyzes the methyl esterification of L-isoaspartyl residues in peptides and proteins that result from spontaneous decomposition of normal L-aspartyl and L-asparaginyl residues. It plays a role in the repair and/or degradation of damaged proteins. The chain is Protein-L-isoaspartate O-methyltransferase from Shewanella woodyi (strain ATCC 51908 / MS32).